A 178-amino-acid chain; its full sequence is dCTP deaminase, dUMP-forming (178 aa).

DCTP is bound by residues 96–101 (RSSLGR), D113, 121–123 (TLE), Q142, Y156, and Q163. Catalysis depends on E123, which acts as the Proton donor/acceptor.

The protein belongs to the dCTP deaminase family. As to quaternary structure, homotrimer.

It catalyses the reaction dCTP + 2 H2O = dUMP + NH4(+) + diphosphate. It participates in pyrimidine metabolism; dUMP biosynthesis; dUMP from dCTP: step 1/1. Its function is as follows. Bifunctional enzyme that catalyzes both the deamination of dCTP to dUTP and the hydrolysis of dUTP to dUMP without releasing the toxic dUTP intermediate. The polypeptide is dCTP deaminase, dUMP-forming (Acetivibrio thermocellus (strain ATCC 27405 / DSM 1237 / JCM 9322 / NBRC 103400 / NCIMB 10682 / NRRL B-4536 / VPI 7372) (Clostridium thermocellum)).